Reading from the N-terminus, the 785-residue chain is Hyperosmolality-gated Ca2+ permeable channel 1.7 (785 aa).

The helical transmembrane segment at 7-27 threads the bilayer; sequence IGLSAAINLLSAFAFLFAFAM. Phosphoserine is present on Ser-54. Helical transmembrane passes span 101-121, 156-176, 373-393, 425-445, 465-485, 510-530, 582-602, 628-648, and 651-671; these read IYLL…GVLV, FWAH…ILYM, LLTT…IAFV, FLPG…LMTM, YFWF…TAFQ, ATFF…AEIL, AVAP…YVVF, LIIC…TKKF, and VTAL…YCAG. The interval 725–761 is disordered; the sequence is VDEEESNPLVRTKRTSQGTTRYNSEASSSATTTPVAN. Residues 739 to 761 show a composition bias toward polar residues; it reads TSQGTTRYNSEASSSATTTPVAN.

Belongs to the CSC1 (TC 1.A.17) family. Phosphorylated and activated by BIK1.

The protein resides in the membrane. It catalyses the reaction Ca(2+)(in) = Ca(2+)(out). Calcium-permeable channel involved in plant stomatal immunity. This chain is Hyperosmolality-gated Ca2+ permeable channel 1.7, found in Arabidopsis thaliana (Mouse-ear cress).